A 383-amino-acid chain; its full sequence is uncharacterized protein (383 aa).

The protein belongs to the peptidase M20 family.

This is an uncharacterized protein from Staphylococcus epidermidis (strain ATCC 12228 / FDA PCI 1200).